A 308-amino-acid polypeptide reads, in one-letter code: MATITAAMVKELRETTGVGMMDCKQALAENDGNMEAAVDWLRKKGLSKAAKKAGRVAAEGLIGALTDGTKGVVIEVNSETDFVARNEQFQGLVKMIAQVALKVGADVDKINAAPVGSSTVAGAISDAIATIGENMTLRRAAALEVTQGVVASYIHNAVIDGAGKMGVIVALESTGKADELGVLGRQLAMHIAATNPQALDPAGLDPEVVRREREVMADKYRQQGKPENMIEKIVENGLKTYYKEVCLLEQAYIHDEKGKAVGQAVKDAEGKVGAPIKITGFFRYALGEGIEKQTSDFAAEVAAASGQK.

An involved in Mg(2+) ion dislocation from EF-Tu region spans residues 80-83 (TDFV).

This sequence belongs to the EF-Ts family.

Its subcellular location is the cytoplasm. Its function is as follows. Associates with the EF-Tu.GDP complex and induces the exchange of GDP to GTP. It remains bound to the aminoacyl-tRNA.EF-Tu.GTP complex up to the GTP hydrolysis stage on the ribosome. In Rhodopseudomonas palustris (strain BisB5), this protein is Elongation factor Ts.